The primary structure comprises 461 residues: Phosphomethylpyrimidine synthase (461 aa).

Substrate-binding positions include Asn81, Met110, Tyr140, His176, 196-198 (SRG), 237-240 (DSLR), and Glu276. Zn(2+) is bound at residue His280. A substrate-binding site is contributed by Tyr303. Residue His344 participates in Zn(2+) binding. Residues Cys424, Cys427, and Cys432 each coordinate [4Fe-4S] cluster.

This sequence belongs to the ThiC family. [4Fe-4S] cluster serves as cofactor.

It catalyses the reaction 5-amino-1-(5-phospho-beta-D-ribosyl)imidazole + S-adenosyl-L-methionine = 4-amino-2-methyl-5-(phosphooxymethyl)pyrimidine + CO + 5'-deoxyadenosine + formate + L-methionine + 3 H(+). It participates in cofactor biosynthesis; thiamine diphosphate biosynthesis. Catalyzes the synthesis of the hydroxymethylpyrimidine phosphate (HMP-P) moiety of thiamine from aminoimidazole ribotide (AIR) in a radical S-adenosyl-L-methionine (SAM)-dependent reaction. The protein is Phosphomethylpyrimidine synthase of Thermosynechococcus vestitus (strain NIES-2133 / IAM M-273 / BP-1).